A 904-amino-acid chain; its full sequence is uncharacterized protein (904 aa).

2 disordered regions span residues 247-275 and 328-360; these read KIGK…SLEF and GDSQ…HHFS. Residues 342 to 360 are compositionally biased toward polar residues; the sequence is GAQTLSPTSHPSSANHHFS. Residues 778-798 traverse the membrane as a helical segment; the sequence is VVQGMILMFAGGKLIFGGRVL.

It localises to the membrane. This is an uncharacterized protein from Homo sapiens (Human).